A 1499-amino-acid chain; its full sequence is Autophagy-related protein 2 (1499 aa).

Polar residues predominate over residues 211-221; it reads EQSVPSYGSSS. Positions 211-237 are disordered; that stretch reads EQSVPSYGSSSSDKEDDNTSDSEDPLS. The span at 224–234 shows a compositional bias: acidic residues; sequence KEDDNTSDSED.

This sequence belongs to the ATG2 family.

It localises to the preautophagosomal structure membrane. It is found in the endoplasmic reticulum membrane. The enzyme catalyses a 1,2-diacyl-sn-glycero-3-phosphocholine(in) = a 1,2-diacyl-sn-glycero-3-phosphocholine(out). The catalysed reaction is a 1,2-diacyl-sn-glycero-3-phospho-L-serine(in) = a 1,2-diacyl-sn-glycero-3-phospho-L-serine(out). It carries out the reaction a 1,2-diacyl-sn-glycero-3-phosphoethanolamine(in) = a 1,2-diacyl-sn-glycero-3-phosphoethanolamine(out). Its function is as follows. Lipid transfer protein required for autophagosome completion and peroxisome degradation. Tethers the edge of the isolation membrane (IM) to the endoplasmic reticulum (ER) and mediates direct lipid transfer from ER to IM for IM expansion. ATG2 binds to the ER exit site (ERES), which is the membrane source for autophagosome formation, using basic residues in its N-terminal region (NR) and to the expanding edge of the IM through its C-terminal region. The latter binding is assisted by an ATG18-PtdIns3P interaction. ATG2 then extracts phospholipids from the membrane source using its NR and transfers them to ATG9 to the IM through its predicted beta-sheet-rich structure for membrane expansion. This chain is Autophagy-related protein 2, found in Kluyveromyces marxianus (strain DMKU3-1042 / BCC 29191 / NBRC 104275) (Yeast).